The sequence spans 980 residues: MRTMHCFLFILLFCLGQVFTDVIFTSERCNRVTYGLRTVNGDPSRYKQCGPSGRVWIVPCAPQMTFDPEDRVCKERLDSRIVKPMRKYETSRTIITTPAPIPSSYPVSAEVIAPGAPAASHAAPEEFVFSTIRPKSRKPKAKTRGKFRKTTTAMIQTTTPMTVESFESMEMTTTPKIVIFASKKNMNNTNRSGESRTQLIRNRNRERGNAPAFTRPGRVRTTTPMSVTHATRFVPGIQHKVTVAPKEVQGMPHTLAPYEKMDRRPDSFGVEELTTMTPEYTVRYNGQTMTENEFLNQLLHIVQHQKTVSERQQQEKFEKMEQERLRQEKEEKARELERRRKLEESETARQAELDRQATIYAEQERMAMERNRELERIRLEEKKRENERVRQEEIAMEISKIRELERLQLERQRKNERVRQELEAARKYKLQEEERQRKIQQQKVEMEQIRQQEEARQEQLRVLEEERARELERVRQEELERQHQMEILRQQEEDQKKKKLEKDREQREQQEAEELNRMIIEKEMKENKQKMIEEKNKRKMLEKEMEDRQNAIYEEEERRIAEEERRKQIEIEERRRIQQQIMIATEERSRLDAMEREREMLRQIKESEKQRKELERQELLATTPITTIKPIYRPDISEYRPPDVESHMIRFTTQSPEWATPSPTWNPAWNTVTAEEETPGIPIIHSQCQVNGECELKYDVDSFCAHPRSPSMYLQCAPLYGRLGRWTERYCPDTLIFIVSIGRCEKGEETRKPYDPDNRVVIPRLPSETSFVEWKGNRVIDHQLPTHISPPRVYPPVPETHQPQIYSTIDQFPKDLLPKIPELATAEKTYAQQYQNHIHGSVVSGGHNHQVVRPIAPTPTIAPNSNVPVSYQISQSQNSLSTNSIKSEIDLSHIHPLFPRVQPDFLSRMLPSLNFKMHDENSGAQSLGSVVKPVLKKIALNQTEQFLDRLLADQKNDEKLRKETIDRLKSSNSDNITKKN.

The first 20 residues, 1-20 (MRTMHCFLFILLFCLGQVFT), serve as a signal peptide directing secretion. N-linked (GlcNAc...) asparagine glycosylation is found at Asn187 and Asn190. Disordered regions lie at residues 310–354 (ERQQ…AELD), 431–451 (QEEE…QIRQ), and 486–512 (EILR…QQEA). N-linked (GlcNAc...) asparagine glycans are attached at residues Asn941 and Asn975.

The protein is Chitin binding domain containing chtb-2 of Caenorhabditis elegans.